The primary structure comprises 232 residues: N-(5'-phosphoribosyl)anthranilate isomerase (232 aa).

It belongs to the TrpF family.

The enzyme catalyses N-(5-phospho-beta-D-ribosyl)anthranilate = 1-(2-carboxyphenylamino)-1-deoxy-D-ribulose 5-phosphate. Its pathway is amino-acid biosynthesis; L-tryptophan biosynthesis; L-tryptophan from chorismate: step 3/5. This Lipomyces starkeyi (Oleaginous yeast) protein is N-(5'-phosphoribosyl)anthranilate isomerase (TRP1).